The sequence spans 454 residues: Histidine--tRNA ligase (454 aa).

The protein belongs to the class-II aminoacyl-tRNA synthetase family. In terms of assembly, homodimer.

The protein localises to the cytoplasm. It catalyses the reaction tRNA(His) + L-histidine + ATP = L-histidyl-tRNA(His) + AMP + diphosphate + H(+). The sequence is that of Histidine--tRNA ligase from Bacteroides fragilis (strain ATCC 25285 / DSM 2151 / CCUG 4856 / JCM 11019 / LMG 10263 / NCTC 9343 / Onslow / VPI 2553 / EN-2).